Here is a 289-residue protein sequence, read N- to C-terminus: Inorganic pyrophosphatase (289 aa).

At serine 2 the chain carries N-acetylserine. N6-acetyllysine is present on lysine 57. Aspartate 116, aspartate 121, and aspartate 153 together coordinate Mg(2+). At lysine 228 the chain carries N6-acetyllysine. Serine 250 carries the phosphoserine modification.

The protein belongs to the PPase family. In terms of assembly, homodimer. Mg(2+) serves as cofactor.

It is found in the cytoplasm. It catalyses the reaction diphosphate + H2O = 2 phosphate + H(+). The chain is Inorganic pyrophosphatase (PPA1) from Pongo abelii (Sumatran orangutan).